The chain runs to 267 residues: 3-methyl-2-oxobutanoate hydroxymethyltransferase (267 aa).

2 residues coordinate Mg(2+): D45 and D84. 3-methyl-2-oxobutanoate-binding positions include 45–46 (DS), D84, and K113. Residue E115 coordinates Mg(2+). E182 (proton acceptor) is an active-site residue.

The protein belongs to the PanB family. In terms of assembly, homodecamer; pentamer of dimers. It depends on Mg(2+) as a cofactor.

Its subcellular location is the cytoplasm. It catalyses the reaction 3-methyl-2-oxobutanoate + (6R)-5,10-methylene-5,6,7,8-tetrahydrofolate + H2O = 2-dehydropantoate + (6S)-5,6,7,8-tetrahydrofolate. Its pathway is cofactor biosynthesis; coenzyme A biosynthesis. In terms of biological role, catalyzes the reversible reaction in which hydroxymethyl group from 5,10-methylenetetrahydrofolate is transferred onto alpha-ketoisovalerate to form ketopantoate. This is 3-methyl-2-oxobutanoate hydroxymethyltransferase from Saccharolobus islandicus (strain Y.N.15.51 / Yellowstone #2) (Sulfolobus islandicus).